The chain runs to 347 residues: sn-1 oleoyl-lipid 12-desaturase (347 aa).

2 helical membrane-spanning segments follow: residues 41–63 (AWSR…AIAP) and 67–85 (LLPV…FVIG). The Histidine box-1 motif lies at 86-90 (HDCGH). Residues 98-118 (WVNNLVGHLAFLPLIYPFHSW) form a helical membrane-spanning segment. The Histidine box-2 motif lies at 122–126 (HNHHH). The next 3 helical transmembrane spans lie at 164–184 (LWWL…FAFE), 196–216 (LFVI…LGVW), and 218–238 (VVKF…TFTL). Positions 286–290 (HHLST) match the Histidine box-3 motif.

It belongs to the fatty acid desaturase type 2 family. Fe(2+) serves as cofactor.

The protein resides in the membrane. It catalyses the reaction a 1-[(9Z)-octadecenoyl]-2-acyl-glycerolipid + 2 reduced [2Fe-2S]-[ferredoxin] + O2 + 2 H(+) = a 1-[(9Z,12Z)-octadecdienoyl]-2-acyl-glycerolipid + 2 oxidized [2Fe-2S]-[ferredoxin] + 2 H2O. It functions in the pathway lipid metabolism; polyunsaturated fatty acid biosynthesis. Its function is as follows. Desaturase involved in fatty acid biosynthesis. Introduces a double bond at carbon 12 of oleoyl groups (18:1) attached to the sn-1 position of the glycerol moiety of membrane glycerolipids. Can also efficiently catalyze the desaturation of palmitoleic acid (16:1) in vitro. The polypeptide is sn-1 oleoyl-lipid 12-desaturase (Picosynechococcus sp. (strain ATCC 27264 / PCC 7002 / PR-6) (Agmenellum quadruplicatum)).